We begin with the raw amino-acid sequence, 279 residues long: Diaminopimelate epimerase (279 aa).

2 residues coordinate substrate: Asn-13 and Asn-66. Cys-75 serves as the catalytic Proton donor. Residues Gly-76–Asn-77, Asn-164, Asn-197, and Glu-215–Arg-216 each bind substrate. Cys-224 functions as the Proton acceptor in the catalytic mechanism. Gly-225–Thr-226 lines the substrate pocket.

The protein belongs to the diaminopimelate epimerase family. Homodimer.

The protein localises to the cytoplasm. It carries out the reaction (2S,6S)-2,6-diaminopimelate = meso-2,6-diaminopimelate. The protein operates within amino-acid biosynthesis; L-lysine biosynthesis via DAP pathway; DL-2,6-diaminopimelate from LL-2,6-diaminopimelate: step 1/1. Catalyzes the stereoinversion of LL-2,6-diaminopimelate (L,L-DAP) to meso-diaminopimelate (meso-DAP), a precursor of L-lysine and an essential component of the bacterial peptidoglycan. This chain is Diaminopimelate epimerase, found in Nostoc punctiforme (strain ATCC 29133 / PCC 73102).